The sequence spans 211 residues: tRNA (guanine-N(7)-)-methyltransferase (211 aa).

4 residues coordinate S-adenosyl-L-methionine: Glu37, Asp62, Glu89, and Asp112. Asp112 is an active-site residue. Lys116 and Asp148 together coordinate substrate.

This sequence belongs to the class I-like SAM-binding methyltransferase superfamily. TrmB family.

The enzyme catalyses guanosine(46) in tRNA + S-adenosyl-L-methionine = N(7)-methylguanosine(46) in tRNA + S-adenosyl-L-homocysteine. It participates in tRNA modification; N(7)-methylguanine-tRNA biosynthesis. Catalyzes the formation of N(7)-methylguanine at position 46 (m7G46) in tRNA. The sequence is that of tRNA (guanine-N(7)-)-methyltransferase from Geobacter metallireducens (strain ATCC 53774 / DSM 7210 / GS-15).